The sequence spans 282 residues: NH(3)-dependent NAD(+) synthetase (282 aa).

51-58 (GISGGVDS) is an ATP binding site. Mg(2+) is bound at residue aspartate 57. Residue arginine 148 coordinates deamido-NAD(+). Residue threonine 168 coordinates ATP. Residue glutamate 173 participates in Mg(2+) binding. Deamido-NAD(+) is bound by residues lysine 181 and aspartate 188. ATP is bound by residues lysine 197 and threonine 219. Position 268-269 (268-269 (HK)) interacts with deamido-NAD(+).

It belongs to the NAD synthetase family. As to quaternary structure, homodimer.

It catalyses the reaction deamido-NAD(+) + NH4(+) + ATP = AMP + diphosphate + NAD(+) + H(+). It functions in the pathway cofactor biosynthesis; NAD(+) biosynthesis; NAD(+) from deamido-NAD(+) (ammonia route): step 1/1. In terms of biological role, catalyzes the ATP-dependent amidation of deamido-NAD to form NAD. Uses ammonia as a nitrogen source. This is NH(3)-dependent NAD(+) synthetase from Burkholderia ambifaria (strain MC40-6).